The primary structure comprises 77 residues: Small VCP/p97-interacting protein (77 aa).

2 disordered regions span residues 1–20 and 25–77; these read MGLC…DLEE and LAEA…WTVS. A lipid anchor (N-myristoyl glycine) is attached at Gly2. S-palmitoyl cysteine attachment occurs at residues Cys4 and Cys7. A VCP/p97-interacting motif (VIM) region spans residues 21 to 33; it reads KRAKLAEAAERRQ. A compositionally biased stretch (basic and acidic residues) spans 25-37; it reads LAEAAERRQKEAA. Position 46 is a phosphoserine (Ser46).

It belongs to the SVIP family. In terms of assembly, interacts (via VIM motif) with VCP/p97. Forms a complex with VCP/p97 and DERL1.

Its subcellular location is the membrane. It is found in the smooth endoplasmic reticulum membrane. The protein localises to the golgi apparatus membrane. It localises to the cell membrane. The protein resides in the lysosome membrane. Negative regulator of the ER-associated degradation pathway (ERAD) of misfolded proteins. It competes with AMFR/gp78 for binding VCP/p97, and inhibits AMFR/gp78-VCP/p97 complex formation that is required for degradation of ERAD substrates. Involved in the regulation of adrenal cortisol and dehydroepiandrosterone (DHEA) biosynthesis. The chain is Small VCP/p97-interacting protein (SVIP) from Homo sapiens (Human).